A 266-amino-acid chain; its full sequence is Thymidylate synthase (266 aa).

DUMP-binding positions include R21 and 127–128 (RR). Residue C147 is the Nucleophile of the active site. DUMP-binding positions include 168-171 (RSAD), N179, and 209-211 (HIY). Residue D171 participates in (6R)-5,10-methylene-5,6,7,8-tetrahydrofolate binding. A265 provides a ligand contact to (6R)-5,10-methylene-5,6,7,8-tetrahydrofolate.

Belongs to the thymidylate synthase family. Bacterial-type ThyA subfamily. In terms of assembly, homodimer.

The protein resides in the cytoplasm. It catalyses the reaction dUMP + (6R)-5,10-methylene-5,6,7,8-tetrahydrofolate = 7,8-dihydrofolate + dTMP. Its pathway is pyrimidine metabolism; dTTP biosynthesis. In terms of biological role, catalyzes the reductive methylation of 2'-deoxyuridine-5'-monophosphate (dUMP) to 2'-deoxythymidine-5'-monophosphate (dTMP) while utilizing 5,10-methylenetetrahydrofolate (mTHF) as the methyl donor and reductant in the reaction, yielding dihydrofolate (DHF) as a by-product. This enzymatic reaction provides an intracellular de novo source of dTMP, an essential precursor for DNA biosynthesis. The chain is Thymidylate synthase from Brachyspira hyodysenteriae (strain ATCC 49526 / WA1).